A 436-amino-acid chain; its full sequence is Hydrogenobyrinate a,c-diamide synthase (436 aa).

Residues Arg244–Ala435 form the GATase cobBQ-type domain. Residue Cys327 is the Nucleophile of the active site.

This sequence belongs to the CobB/CbiA family. The cofactor is Mg(2+).

It catalyses the reaction hydrogenobyrinate + 2 L-glutamine + 2 ATP + 2 H2O = hydrogenobyrinate a,c-diamide + 2 L-glutamate + 2 ADP + 2 phosphate + 2 H(+). The protein operates within cofactor biosynthesis; adenosylcobalamin biosynthesis; cob(II)yrinate a,c-diamide from precorrin-2 (aerobic route): step 9/10. In terms of biological role, catalyzes the ATP-dependent amidation of the two carboxylate groups at positions a and c of hydrogenobyrinate, using either L-glutamine or ammonia as the nitrogen source. This is Hydrogenobyrinate a,c-diamide synthase from Brucella ovis (strain ATCC 25840 / 63/290 / NCTC 10512).